The primary structure comprises 102 residues: Large ribosomal subunit protein bL21 (102 aa).

The protein belongs to the bacterial ribosomal protein bL21 family. As to quaternary structure, part of the 50S ribosomal subunit. Contacts protein L20.

Its function is as follows. This protein binds to 23S rRNA in the presence of protein L20. In Bifidobacterium longum subsp. infantis (strain ATCC 15697 / DSM 20088 / JCM 1222 / NCTC 11817 / S12), this protein is Large ribosomal subunit protein bL21.